Reading from the N-terminus, the 801-residue chain is MSLLHIAVILPLIFALIIPILYRFFKRIHLGWFVLPVPIVIFIYMLTLIKTTMSGNTVMKTLNWMPHFGMNFDLYLDGLGLLFSLLISGIGSLVVLYSIGYLSKSEQLGNFYCYLLLFMGAMLGVVLSDNVIILYLFWELTSFSSFLLISFWRERQASIYGAQKSLIITVFGGLSLLGGIILLAIPTQSFSIQYMIQHASEIQNSPFFIFAMILIMIGAFTKSAQFPFYIWLPDAMEAPTPVSAYLHSATMVKAGLYLIARMTPIFAASQGWVWTVTLVGLITLFWASLNATKQQDLKGILAFSTVSQLGMIMAMLGIGAISYHYQGDDSKIYAAAFTAAIFHLINHATFKGALFMITGAVDHSTGTRDVKKLGGLLTIMPISFTITVITALSMAGVPPFNGFLSKESFLETTFTASQANLFSVDTLGYLFPIIGIVGSVFTFVYSIKFIMHIFFGQYKPEQLPKKAHEVSILMLLSPAILATLVIVLGLFPGILTNSIIEPATSSINHTVIDDVEFHMFHGLTPAFLSTLVIYILGILLIVTFSYWVKLLQRQPGKLTFNYWYNRSANVIPNYSEKMTNSYVTDYSRNNLVIIFGALILLTFVTIFSVPFNINFKDVSPIRIFEVCIVILLLSAAFLILFAKSRLFSIIMLSAVGYAVSVLFIFFKAPDLALTQFVVESISTALFLLCFYHLPNLNRYNEKRSFQLTNALIAGGVGLSVIIIGLIAYGNRHFESISKFYQEHVYDLAHGKNMVNVILVDFRGMDTLFESSVLGIAGLAVYTMIKLRKKRQTQGNEVKNHE.

19 helical membrane-spanning segments follow: residues 1–21, 28–48, 79–99, 117–137, 166–186, 206–226, 265–285, 300–320, 337–357, 373–393, 427–447, 472–492, 522–542, 591–611, 623–643, 646–666, 671–691, 707–727, and 764–784; these read MSLLHIAVILPLIFALIIPIL, IHLGWFVLPVPIVIFIYMLTL, LGLLFSLLISGIGSLVVLYSI, LFMGAMLGVVLSDNVIILYLF, LIITVFGGLSLLGGIILLAIP, PFFIFAMILIMIGAFTKSAQF, IFAASQGWVWTVTLVGLITLF, ILAFSTVSQLGMIMAMLGIGA, FTAAIFHLINHATFKGALFMI, LGGLLTIMPISFTITVITALS, LGYLFPIIGIVGSVFTFVYSI, ILMLLSPAILATLVIVLGLFP, GLTPAFLSTLVIYILGILLIV, LVIIFGALILLTFVTIFSVPF, IFEVCIVILLLSAAFLILFAK, LFSIIMLSAVGYAVSVLFIFF, LALTQFVVESISTALFLLCFY, LTNALIAGGVGLSVIIIGLIA, and MDTLFESSVLGIAGLAVYTMI.

Belongs to the CPA3 antiporters (TC 2.A.63) subunit A family. As to quaternary structure, may form a heterooligomeric complex that consists of seven subunits: mnhA1, mnhB1, mnhC1, mnhD1, mnhE1, mnhF1 and mnhG1.

The protein localises to the cell membrane. Functionally, mnh complex is a Na(+)/H(+) antiporter involved in Na(+) excretion. The protein is Na(+)/H(+) antiporter subunit A1 (mnhA1) of Staphylococcus aureus (strain Mu3 / ATCC 700698).